The chain runs to 168 residues: INO80 complex subunit 3 (168 aa).

A compositionally biased stretch (polar residues) spans T115 to L129. Positions T115 to K168 are disordered. Residues Q130–S148 are compositionally biased toward low complexity. The span at T156–K168 shows a compositional bias: basic and acidic residues.

In terms of assembly, component of the INO80 chromatin remodeling complex.

Its subcellular location is the nucleus. Its function is as follows. Component of the INO80 complex which remodels chromatin by shifting nucleosomes and is involved in DNA repair. The protein is INO80 complex subunit 3 (iec3) of Schizosaccharomyces pombe (strain 972 / ATCC 24843) (Fission yeast).